Reading from the N-terminus, the 69-residue chain is Conotoxin Gla-TxXI (69 aa).

Positions M1–A25 are cleaved as a signal peptide. Disulfide bonds link C26/C40, C33/C45, C39/C49, and C44/C53. Residue E29 is modified to 4-carboxyglutamate. P56 is subject to Proline amide. Residues A60 to R69 constitute a propeptide that is removed on maturation.

Contains 4 disulfide bonds. Expressed by the venom duct.

The protein localises to the secreted. This Conus textile (Cloth-of-gold cone) protein is Conotoxin Gla-TxXI.